The primary structure comprises 182 residues: Early nodulin-like protein 10 (182 aa).

Positions 1 to 20 (MSSVMMCCCLLLLFGLLSEG) are cleaved as a signal peptide. The Phytocyanin domain occupies 21 to 125 (REILVGGKSN…GEKLRVVVLS (105 aa)). Asn-65 carries an N-linked (GlcNAc...) asparagine glycan. The cysteines at positions 79 and 113 are disulfide-linked. 2 N-linked (GlcNAc...) asparagine glycosylation sites follow: Asn-129 and Asn-148. The GPI-anchor amidated asparagine moiety is linked to residue Asn-157. Positions 158–182 (AHIMNKGSLNTAWSLLLLLPLGLLV) are cleaved as a propeptide — removed in mature form.

This sequence belongs to the early nodulin-like (ENODL) family. Mostly expressed in flowers, and, to a lower extent, in leaves, but barely in seedlings, stems, seeds and roots.

It localises to the cell membrane. In terms of biological role, may act as a carbohydrate transporter. In Arabidopsis thaliana (Mouse-ear cress), this protein is Early nodulin-like protein 10.